Consider the following 158-residue polypeptide: Cyclic pyranopterin monophosphate synthase (158 aa).

Substrate-binding positions include 75–77 (LCH) and 113–114 (ME). Residue aspartate 128 is part of the active site.

The protein belongs to the MoaC family. In terms of assembly, homohexamer; trimer of dimers.

The catalysed reaction is (8S)-3',8-cyclo-7,8-dihydroguanosine 5'-triphosphate = cyclic pyranopterin phosphate + diphosphate. Its pathway is cofactor biosynthesis; molybdopterin biosynthesis. In terms of biological role, catalyzes the conversion of (8S)-3',8-cyclo-7,8-dihydroguanosine 5'-triphosphate to cyclic pyranopterin monophosphate (cPMP). This is Cyclic pyranopterin monophosphate synthase from Mannheimia succiniciproducens (strain KCTC 0769BP / MBEL55E).